The sequence spans 139 residues: Large ribosomal subunit protein eL34 (139 aa).

Positions 113-139 (VSKPPKIAKAPAAAAAAKPAKTATKSK) are disordered.

It belongs to the eukaryotic ribosomal protein eL34 family.

The chain is Large ribosomal subunit protein eL34 (RpL34) from Ochlerotatus triseriatus (Eastern treehole mosquito).